A 455-amino-acid chain; its full sequence is Immunoglobulin alpha-2 heavy chain (455 aa).

4 Ig-like domains span residues E1–C95, P121–T213, P227–T322, and P330–D432. The variable (V) domain, involved in antigen recognition stretch occupies residues E1–S115. 2 disulfides stabilise this stretch: C22/C95 and C141/C200. Residues A116–Y455 form a constant (C) domain region. N-linked (GlcNAc...) asparagine glycosylation is found at N162, N207, and N246. Cystine bridges form between C225-C282 and C249-C306. Residue N320 is glycosylated (N-linked (GlcNAc...) asparagine). The cysteines at positions 352 and 415 are disulfide-linked. N442 is a glycosylation site (N-linked (GlcNAc...) asparagine).

In terms of assembly, immunoglobulins are composed of two identical heavy chains and two identical light chains; disulfide-linked. Monomeric or polymeric.

Its subcellular location is the secreted. The protein localises to the cell membrane. Functionally, immunoglobulins, also known as antibodies, are membrane-bound or secreted glycoproteins produced by B lymphocytes. In the recognition phase of humoral immunity, the membrane-bound immunoglobulins serve as receptors which, upon binding of a specific antigen, trigger the clonal expansion and differentiation of B lymphocytes into immunoglobulins-secreting plasma cells. Secreted immunoglobulins mediate the effector phase of humoral immunity, which results in the elimination of bound antigens. The antigen binding site is formed by the variable domain of one heavy chain, together with that of its associated light chain. Thus, each immunoglobulin has two antigen binding sites with remarkable affinity for a particular antigen. The variable domains are assembled by a process called V-(D)-J rearrangement and can then be subjected to somatic hypermutations which, after exposure to antigen and selection, allow affinity maturation for a particular antigen. Ig alpha is the major immunoglobulin class in body secretions. This is Immunoglobulin alpha-2 heavy chain from Homo sapiens (Human).